Consider the following 164-residue polypeptide: Phosphopantetheine adenylyltransferase (164 aa).

T14 is a binding site for substrate. Residues 14–15 (TF) and H22 contribute to the ATP site. Substrate is bound by residues K46, L78, and R92. ATP is bound by residues 93 to 95 (GLR), E103, and 128 to 134 (HAFISST).

This sequence belongs to the bacterial CoaD family. Homohexamer. Mg(2+) serves as cofactor.

It localises to the cytoplasm. It carries out the reaction (R)-4'-phosphopantetheine + ATP + H(+) = 3'-dephospho-CoA + diphosphate. Its pathway is cofactor biosynthesis; coenzyme A biosynthesis; CoA from (R)-pantothenate: step 4/5. Its function is as follows. Reversibly transfers an adenylyl group from ATP to 4'-phosphopantetheine, yielding dephospho-CoA (dPCoA) and pyrophosphate. The polypeptide is Phosphopantetheine adenylyltransferase (Vibrio cholerae serotype O1 (strain ATCC 39541 / Classical Ogawa 395 / O395)).